A 614-amino-acid chain; its full sequence is Phosphomethylpyrimidine synthase (614 aa).

Residues asparagine 226, methionine 255, tyrosine 284, histidine 320, 340 to 342 (SRG), 381 to 384 (DGLR), and glutamate 420 contribute to the substrate site. Histidine 424 lines the Zn(2+) pocket. Tyrosine 447 is a binding site for substrate. Histidine 488 lines the Zn(2+) pocket. 3 residues coordinate [4Fe-4S] cluster: cysteine 568, cysteine 571, and cysteine 576.

It belongs to the ThiC family. In terms of assembly, homodimer. It depends on [4Fe-4S] cluster as a cofactor.

It carries out the reaction 5-amino-1-(5-phospho-beta-D-ribosyl)imidazole + S-adenosyl-L-methionine = 4-amino-2-methyl-5-(phosphooxymethyl)pyrimidine + CO + 5'-deoxyadenosine + formate + L-methionine + 3 H(+). Its pathway is cofactor biosynthesis; thiamine diphosphate biosynthesis. Functionally, catalyzes the synthesis of the hydroxymethylpyrimidine phosphate (HMP-P) moiety of thiamine from aminoimidazole ribotide (AIR) in a radical S-adenosyl-L-methionine (SAM)-dependent reaction. The protein is Phosphomethylpyrimidine synthase of Acidovorax ebreus (strain TPSY) (Diaphorobacter sp. (strain TPSY)).